Here is a 359-residue protein sequence, read N- to C-terminus: tRNA-specific 2-thiouridylase MnmA (359 aa).

Residues 6-13 (AMSGGVDS) and Leu-32 each bind ATP. The active-site Nucleophile is Cys-97. Cys-97 and Cys-195 are disulfide-bonded. ATP is bound at residue Gly-121. The segment at 144-146 (KDQ) is interaction with tRNA. The Cysteine persulfide intermediate role is filled by Cys-195.

It belongs to the MnmA/TRMU family.

Its subcellular location is the cytoplasm. The enzyme catalyses S-sulfanyl-L-cysteinyl-[protein] + uridine(34) in tRNA + AH2 + ATP = 2-thiouridine(34) in tRNA + L-cysteinyl-[protein] + A + AMP + diphosphate + H(+). Its function is as follows. Catalyzes the 2-thiolation of uridine at the wobble position (U34) of tRNA, leading to the formation of s(2)U34. This Tropheryma whipplei (strain TW08/27) (Whipple's bacillus) protein is tRNA-specific 2-thiouridylase MnmA.